Reading from the N-terminus, the 114-residue chain is Large ribosomal subunit protein P2v (114 aa).

The interval 74–114 is disordered; the sequence is VASGGGGGAAPAAEPASVESKKKEEEKEESEDDGGMMSLFD. S103 is modified (phosphoserine).

Belongs to the eukaryotic ribosomal protein P1/P2 family. In terms of assembly, P1 and P2 exist as dimers at the large ribosomal subunit. Post-translationally, phosphorylated.

Functionally, plays an important role in the elongation step of protein synthesis. The sequence is that of Large ribosomal subunit protein P2v (RPP2E) from Arabidopsis thaliana (Mouse-ear cress).